Consider the following 236-residue polypeptide: Ureidoacrylate amidohydrolase RutB (236 aa).

The active-site Proton acceptor is the D24. K133 is a catalytic residue. C166 acts as the Nucleophile in catalysis.

It belongs to the isochorismatase family. RutB subfamily.

The enzyme catalyses (Z)-3-ureidoacrylate + H2O + H(+) = (Z)-3-aminoacrylate + NH4(+) + CO2. It catalyses the reaction (Z)-3-ureidoacrylate + H2O = (Z)-3-aminoacrylate + carbamate + H(+). The catalysed reaction is (Z)-2-methylureidoacrylate + H2O + H(+) = (Z)-2-methylaminoacrylate + NH4(+) + CO2. Functionally, hydrolyzes ureidoacrylate to form aminoacrylate and carbamate. The carbamate hydrolyzes spontaneously, thereby releasing one of the nitrogen atoms of the pyrimidine ring as ammonia and one of its carbon atoms as CO2. In Klebsiella pneumoniae subsp. pneumoniae (strain ATCC 700721 / MGH 78578), this protein is Ureidoacrylate amidohydrolase RutB.